A 259-amino-acid chain; its full sequence is BTB/POZ domain-containing protein KCTD4 (259 aa).

Positions 33-134 (TLMTLNVGGY…EVKSRWEKEQ (102 aa)) constitute a BTB domain.

The protein is BTB/POZ domain-containing protein KCTD4 (Kctd4) of Mus musculus (Mouse).